A 137-amino-acid chain; its full sequence is Protein Flattop homolog (137 aa).

It belongs to the Flattop family.

The protein localises to the cytoplasm. The protein resides in the cytoskeleton. It is found in the flagellum axoneme. Microtubule inner protein (MIP) part of the dynein-decorated doublet microtubules (DMTs) in cilia axoneme. Acts as a regulator of cilium basal body docking and positioning in mono- and multiciliated cells. Regulates basal body docking and cilia formation in multiciliated lung cells. Regulates kinocilium positioning and stereocilia bundle morphogenesis in the inner ear. The sequence is that of Protein Flattop homolog from Chlamydomonas reinhardtii (Chlamydomonas smithii).